A 133-amino-acid polypeptide reads, in one-letter code: Snaclec echicetin subunit alpha (133 aa).

3 cysteine pairs are disulfide-bonded: C4-C15, C31-C127, and C102-C119. One can recognise a C-type lectin domain in the interval 11–128 (YEGHCYQLFR…CEFKFPFVCK (118 aa)).

The protein belongs to the snaclec family. As to quaternary structure, heterodimer of subunits alpha and beta; disulfide-linked. Forms an active complex with the pentameric immunoglobuline Mkappa (IgMkappa). In terms of tissue distribution, expressed by the venom gland.

The protein resides in the secreted. In terms of biological role, echicetin itself inhibits aggregation of washed platelets induced by vWF, thrombin or alboaggregin-A. However, when complexed with the pentameric plasma immunoglobulin Mkappa (IgMkappa), echicetin binds specifically to GPIb and activates platelets. This is caused by P-selectin expression and activation of alpha-IIb/beta-3 as well as tyrosine phosphorylation of several signal transduction molecules, including p53/56(LYN), p64, p72(SYK), p70 to p90, and p120. In vivo, it induces thrombocytopenia when injected into mice, probably accounting of activation of platelets rather than inhibition. The sequence is that of Snaclec echicetin subunit alpha from Echis carinatus sochureki (Saw-scaled viper).